Reading from the N-terminus, the 130-residue chain is Histone H2A type 1 (130 aa).

Positions 1–22 (MSGRGKQGGKARAKAKSRSSRA) are disordered. The residue at position 2 (Ser-2) is an N-acetylserine. Phosphoserine; by RPS6KA5 is present on Ser-2. Arg-4 bears the Citrulline; alternate mark. Arg-4 is modified (symmetric dimethylarginine; by PRMT5; alternate). Lys-6 bears the N6-(2-hydroxyisobutyryl)lysine mark. Positions 7–19 (QGGKARAKAKSRS) are enriched in basic residues. An N6-(2-hydroxyisobutyryl)lysine; alternate modification is found at Lys-10. At Lys-10 the chain carries N6-lactoyllysine; alternate. Lys-10 carries the post-translational modification N6-succinyllysine; alternate. Residues Lys-14 and Lys-16 each participate in a glycyl lysine isopeptide (Lys-Gly) (interchain with G-Cter in ubiquitin) cross-link. The residue at position 37 (Lys-37) is an N6-(2-hydroxyisobutyryl)lysine; alternate. N6-(beta-hydroxybutyryl)lysine; alternate is present on Lys-37. Lys-37 bears the N6-crotonyllysine; alternate mark. N6-(2-hydroxyisobutyryl)lysine is present on residues Lys-75 and Lys-76. Lys-96 is modified (N6-(2-hydroxyisobutyryl)lysine; alternate). N6-succinyllysine; alternate is present on Lys-96. Lys-96 is subject to N6-glutaryllysine; alternate. The residue at position 100 (Lys-100) is an N6-glutaryllysine. Gln-105 carries the post-translational modification N5-methylglutamine. An N6-(2-hydroxyisobutyryl)lysine; alternate modification is found at Lys-119. Lys-119 and Lys-120 each carry N6-crotonyllysine; alternate. An N6-glutaryllysine; alternate mark is found at Lys-119 and Lys-120. Lys-120 is covalently cross-linked (Glycyl lysine isopeptide (Lys-Gly) (interchain with G-Cter in ubiquitin); alternate). Position 121 is a phosphothreonine; by DCAF1 (Thr-121). The residue at position 126 (Lys-126) is an N6-crotonyllysine; alternate. An N6-glutaryllysine; alternate modification is found at Lys-126.

This sequence belongs to the histone H2A family. As to quaternary structure, the nucleosome is a histone octamer containing two molecules each of H2A, H2B, H3 and H4 assembled in one H3-H4 heterotetramer and two H2A-H2B heterodimers. The octamer wraps approximately 147 bp of DNA. Interacts with VRK1; the interaction is mediated by the nucleosome acidic patch, a cluster of negatively charged residues of H2A and H2B forming a cleft within the nucleosome core. Post-translationally, deiminated on Arg-4 in granulocytes upon calcium entry. In terms of processing, monoubiquitination of Lys-120 (H2AK119Ub) by RING1, TRIM37 and RNF2/RING2 complex gives a specific tag for epigenetic transcriptional repression and participates in X chromosome inactivation of female mammals. It is involved in the initiation of both imprinted and random X inactivation. Ubiquitinated H2A is enriched in inactive X chromosome chromatin. Ubiquitination of H2A functions downstream of methylation of 'Lys-27' of histone H3 (H3K27me). H2AK119Ub by RNF2/RING2 can also be induced by ultraviolet and may be involved in DNA repair. Following DNA double-strand breaks (DSBs), it is ubiquitinated through 'Lys-63' linkage of ubiquitin moieties by the E2 ligase UBE2N and the E3 ligases RNF8 and RNF168, leading to the recruitment of repair proteins to sites of DNA damage. Ubiquitination at Lys-14 and Lys-16 (H2AK13Ub and H2AK15Ub, respectively) in response to DNA damage is initiated by RNF168 that mediates monoubiquitination at these 2 sites, and 'Lys-63'-linked ubiquitin are then conjugated to monoubiquitin; RNF8 is able to extend 'Lys-63'-linked ubiquitin chains in vitro. H2AK119Ub and ionizing radiation-induced 'Lys-63'-linked ubiquitination (H2AK13Ub and H2AK15Ub) are distinct events. Phosphorylation on Ser-2 (H2AS1ph) is enhanced during mitosis. Phosphorylation on Ser-2 by RPS6KA5/MSK1 directly represses transcription. Acetylation of H3 inhibits Ser-2 phosphorylation by RPS6KA5/MSK1. Phosphorylation at Thr-121 (H2AT120ph) by DCAF1 is present in the regulatory region of many tumor suppresor genes and down-regulates their transcription. Post-translationally, symmetric dimethylation on Arg-4 by the PRDM1/PRMT5 complex may play a crucial role in the germ-cell lineage. In terms of processing, glutamine methylation at Gln-105 (H2AQ104me) by FBL is specifically dedicated to polymerase I. It is present at 35S ribosomal DNA locus and impairs binding of the FACT complex. Crotonylation (Kcr) is specifically present in male germ cells and marks testis-specific genes in post-meiotic cells, including X-linked genes that escape sex chromosome inactivation in haploid cells. Crotonylation marks active promoters and enhancers and confers resistance to transcriptional repressors. It is also associated with post-meiotically activated genes on autosomes. Post-translationally, lactylated in macrophages by EP300/P300 by using lactoyl-CoA directly derived from endogenous or exogenous lactate, leading to stimulates gene transcription.

It is found in the nucleus. The protein resides in the chromosome. Functionally, core component of nucleosome. Nucleosomes wrap and compact DNA into chromatin, limiting DNA accessibility to the cellular machineries which require DNA as a template. Histones thereby play a central role in transcription regulation, DNA repair, DNA replication and chromosomal stability. DNA accessibility is regulated via a complex set of post-translational modifications of histones, also called histone code, and nucleosome remodeling. The sequence is that of Histone H2A type 1 from Rattus norvegicus (Rat).